Consider the following 617-residue polypeptide: MSPQRDRINAFYKDNPHPKGSRIVINREHLMIDRPYVLLAVLFVMFLSLIGLLAIAGIRLHRAAIYTAEIHKSLSTNLDVTNSIEHQVKDVLTPLFKIIGDEVGLRTPQRFTDLVKFISDKIKFLNPDREYDFRDLTWCINPPERIKLDYDQYCADVAAEELMNALVNSTLLETRTTNQFLAVSKGNCSGPTTIRGQFSNMSLSLLDLYLGRGYNVSSIVTMTSQGMYGGTYLVEKPNLSSKRSELSQLSMYRVFEVGVIRNPGLGAPVFHMTNYLEQPVSNDLSNCMVALGELKLAALCHREDSITIPYQGSGKGVSFQLVKLGVWKSPTDMQSWVTLSTDDPVIDRLYLSSHRGVIADNQAKWAVPTTRTDDKLRMETCFQQACKGKIQALCENPEWAPLKDNRIPSYGVLSVDLSLTVELKIKIASGFGPLITHGSGMDLYKSNHNNVYWLTIPPMKNLALGVINTLEWIPRFKVSPYLFNVPIKEAGEDCHAPTYLPAEVDGDVKLSSNLVILPGQDLQYVLATYDTSRVEHAVVYYVYSPSRSFSYFYPFRLPIKGVPIELQVECFTWDQKLWCRHFCVLADSESGGHITHSGMVGMGVSCTVTREDGTNRR.

The Intravirion portion of the chain corresponds to 1 to 37 (MSPQRDRINAFYKDNPHPKGSRIVINREHLMIDRPYV). The segment at 1 to 154 (MSPQRDRINA…RIKLDYDQYC (154 aa)) is stalk. The chain crosses the membrane as a helical; Signal-anchor for type II membrane protein span at residues 38–58 (LLAVLFVMFLSLIGLLAIAGI). Residues 59–617 (RLHRAAIYTA…VTREDGTNRR (559 aa)) lie on the Virion surface side of the membrane. Residues Asn168, Asn187, Asn200, Asn215, and Asn238 are each glycosylated (N-linked (GlcNAc...) asparagine; by host). 5 cysteine pairs are disulfide-bonded: Cys188–Cys606, Cys287–Cys300, Cys381–Cys494, Cys386–Cys394, and Cys570–Cys579. Residues 458-543 (PMKNLALGVI…VEHAVVYYVY (86 aa)) form an interaction with host NECTIN4 receptor region.

This sequence belongs to the paramyxoviruses hemagglutinin-neuraminidase family. Non-sialidase subfamily. In terms of assembly, homodimer; disulfide-linked. Further forms homotetramer (dimer of dimers). Interacts (via C-terminus) with human NECTIN4 (via N-terminus); this interaction allows attachment to the respiratory epithelium and viral entry. Interacts (via C-terminus) with human SLAMF1/CD150 (via N-terminus); this interaction allows attachment and viral entry into the CD150-expressing immune cells. Interacts with human CD46 antigen.

It is found in the virion membrane. It localises to the host cell membrane. Its function is as follows. Attaches the virus to the human SLAMF1/CD150 receptor for entry into host dendritic cells, macrophages, activated memory T cells and naive or memory B cells, thereby explaining the long immunosuppression that follows infection. In the respiratory airways, binds to the NECTIN4 receptor for entry into the host cell. Binding of H protein to the receptor induces a conformational change that allows the F protein to trigger virion/cell membranes fusion. The vaccine and laboratory-adapted strains use host CD46 as an alternate receptor. The high degree of interaction between H and CD46 results in down-regulation of the latter from the surface of infected cells, rendering them more sensitive to c3b-mediated complement lysis. In Homo sapiens (Human), this protein is Hemagglutinin glycoprotein (H).